Consider the following 182-residue polypeptide: Adenine phosphoribosyltransferase (182 aa).

This sequence belongs to the purine/pyrimidine phosphoribosyltransferase family. Homodimer.

The protein localises to the cytoplasm. It catalyses the reaction AMP + diphosphate = 5-phospho-alpha-D-ribose 1-diphosphate + adenine. It functions in the pathway purine metabolism; AMP biosynthesis via salvage pathway; AMP from adenine: step 1/1. Functionally, catalyzes a salvage reaction resulting in the formation of AMP, that is energically less costly than de novo synthesis. The polypeptide is Adenine phosphoribosyltransferase (Pseudomonas syringae pv. syringae (strain B728a)).